Consider the following 2179-residue polypeptide: Probable inactive serine/threonine-protein kinase lvsG (2179 aa).

Residues 100 to 167 are disordered; the sequence is DHDLNKNKNN…TSISLNDLNS (68 aa). Composition is skewed to low complexity over residues 106–121 and 141–159; these read NKNN…NNSG and LSPS…LSTS. One copy of the WD 1 repeat lies at 216–256; sequence LYERSLKTSQQQQQQQQQQFKFQPNETLSLWEYFDEINSPP. Disordered stretches follow at residues 281–300, 523–556, 589–621, 778–801, 844–959, 1033–1055, 1079–1153, 1339–1362, and 1785–1807; these read LDNK…NSQS, DNDN…TVGW, DSMG…NSGK, KSLK…QPQF, NNHH…NKPS, AQQQ…SKQL, GISK…STTD, NHSN…KNGS, and TTTT…PNSL. Residues 463-801 form the BEACH domain; the sequence is YHQPLENQFE…QQQTQQQPQF (339 aa). Positions 534-548 are enriched in low complexity; it reads NSSSSNNNNNNNNED. A compositionally biased stretch (gly residues) spans 590–602; that stretch reads SMGGGIGSIGSTG. Low complexity-rich tracts occupy residues 783 to 800, 853 to 943, 1033 to 1047, and 1084 to 1098; these read QRQQ…QQPQ, NSNI…GVNN, AQQQ…QQQA, and TTNA…TNSN. Residues 1021–1049 adopt a coiled-coil conformation; that stretch reads LQQQLQQQQQQQAQQQQSQQQSQQQQANS. The Protein kinase domain occupies 1064-1400; it reads ESMIKKYSNG…VNELLSSSLF (337 aa). A compositionally biased stretch (polar residues) spans 1099-1122; sequence MGDSIGNNITSPPSPTSLKDSSSI. Residues 1123-1134 are compositionally biased toward low complexity; it reads QQQQQQQQQQQQ. Residues 1135-1153 show a composition bias toward polar residues; that stretch reads NSESTRPITPPNVSNSTTD. Composition is skewed to low complexity over residues 1339-1360 and 1785-1801; these read NHSN…NNKN and TTTT…NNNN. WD repeat units lie at residues 1864 to 1903, 1906 to 1942, 1945 to 1983, 2007 to 2048, 2052 to 2089, and 2149 to 2179; these read EHNA…SLTT, QHMH…KVNV, EPTG…LTHE, SNSN…ILEQ, HHDS…PIIS, and PKQS…KICQ.

Belongs to the protein kinase superfamily. Ser/Thr protein kinase family.

The protein is Probable inactive serine/threonine-protein kinase lvsG (lvsG) of Dictyostelium discoideum (Social amoeba).